We begin with the raw amino-acid sequence, 415 residues long: 8-amino-7-oxononanoate synthase (415 aa).

A substrate-binding site is contributed by Arg-21. 117 to 118 contributes to the pyridoxal 5'-phosphate binding site; that stretch reads GY. Residue His-149 participates in substrate binding. Positions 195, 223, and 251 each coordinate pyridoxal 5'-phosphate. An N6-(pyridoxal phosphate)lysine modification is found at Lys-254. Thr-374 contacts substrate.

Belongs to the class-II pyridoxal-phosphate-dependent aminotransferase family. BioF subfamily. As to quaternary structure, homodimer. It depends on pyridoxal 5'-phosphate as a cofactor.

The catalysed reaction is 6-carboxyhexanoyl-[ACP] + L-alanine + H(+) = (8S)-8-amino-7-oxononanoate + holo-[ACP] + CO2. It functions in the pathway cofactor biosynthesis; biotin biosynthesis. In terms of biological role, catalyzes the decarboxylative condensation of pimeloyl-[acyl-carrier protein] and L-alanine to produce 8-amino-7-oxononanoate (AON), [acyl-carrier protein], and carbon dioxide. In Ralstonia pickettii (strain 12J), this protein is 8-amino-7-oxononanoate synthase.